The primary structure comprises 161 residues: Large ribosomal subunit protein uL30m (161 aa).

The transit peptide at 1 to 34 directs the protein to the mitochondrion; sequence MAGILRLVVQWPPGRLQTVTKGVESLICTDWIRH.

It belongs to the universal ribosomal protein uL30 family. As to quaternary structure, component of the mitochondrial large ribosomal subunit (mt-LSU). Mature mammalian 55S mitochondrial ribosomes consist of a small (28S) and a large (39S) subunit. The 28S small subunit contains a 12S ribosomal RNA (12S mt-rRNA) and 30 different proteins. The 39S large subunit contains a 16S rRNA (16S mt-rRNA), a copy of mitochondrial valine transfer RNA (mt-tRNA(Val)), which plays an integral structural role, and 52 different proteins.

The protein resides in the mitochondrion. This Homo sapiens (Human) protein is Large ribosomal subunit protein uL30m (MRPL30).